Consider the following 490-residue polypeptide: Glutamate--tRNA ligase 2 (490 aa).

The 'HIGH' region signature appears at proline 33–glycine 43. The 'KMSKS' region motif lies at lysine 262–arginine 266. Lysine 265 contributes to the ATP binding site.

The protein belongs to the class-I aminoacyl-tRNA synthetase family. Glutamate--tRNA ligase type 1 subfamily. Monomer.

It is found in the cytoplasm. The enzyme catalyses tRNA(Glu) + L-glutamate + ATP = L-glutamyl-tRNA(Glu) + AMP + diphosphate. Its function is as follows. Catalyzes the attachment of glutamate to tRNA(Glu) in a two-step reaction: glutamate is first activated by ATP to form Glu-AMP and then transferred to the acceptor end of tRNA(Glu). This is Glutamate--tRNA ligase 2 from Parvibaculum lavamentivorans (strain DS-1 / DSM 13023 / NCIMB 13966).